The primary structure comprises 198 residues: Ciliary neurotrophic factor (198 aa).

The protein belongs to the CNTF family. In terms of tissue distribution, nervous system.

The protein resides in the cytoplasm. CNTF is a survival factor for various neuronal cell types. Seems to prevent the degeneration of motor axons after axotomy. This chain is Ciliary neurotrophic factor (Cntf), found in Mus musculus (Mouse).